The primary structure comprises 683 residues: Elongation factor G 2 (683 aa).

Residues 4–279 (QQMRNIGIMA…AVVEYLPAPQ (276 aa)) enclose the tr-type G domain. GTP contacts are provided by residues 13 to 20 (AHVDAGKT), 77 to 81 (DTPGH), and 131 to 134 (NKMD).

It belongs to the TRAFAC class translation factor GTPase superfamily. Classic translation factor GTPase family. EF-G/EF-2 subfamily.

Its subcellular location is the cytoplasm. In terms of biological role, catalyzes the GTP-dependent ribosomal translocation step during translation elongation. During this step, the ribosome changes from the pre-translocational (PRE) to the post-translocational (POST) state as the newly formed A-site-bound peptidyl-tRNA and P-site-bound deacylated tRNA move to the P and E sites, respectively. Catalyzes the coordinated movement of the two tRNA molecules, the mRNA and conformational changes in the ribosome. The sequence is that of Elongation factor G 2 (fusB) from Treponema pallidum (strain Nichols).